The sequence spans 287 residues: Ribosomal RNA small subunit methyltransferase A (287 aa).

Asn-18, Leu-20, Gly-45, Glu-66, Asp-91, and Asn-118 together coordinate S-adenosyl-L-methionine.

The protein belongs to the class I-like SAM-binding methyltransferase superfamily. rRNA adenine N(6)-methyltransferase family. RsmA subfamily.

It is found in the cytoplasm. The enzyme catalyses adenosine(1518)/adenosine(1519) in 16S rRNA + 4 S-adenosyl-L-methionine = N(6)-dimethyladenosine(1518)/N(6)-dimethyladenosine(1519) in 16S rRNA + 4 S-adenosyl-L-homocysteine + 4 H(+). Functionally, specifically dimethylates two adjacent adenosines (A1518 and A1519) in the loop of a conserved hairpin near the 3'-end of 16S rRNA in the 30S particle. May play a critical role in biogenesis of 30S subunits. The polypeptide is Ribosomal RNA small subunit methyltransferase A (Haemophilus influenzae (strain PittEE)).